Consider the following 372-residue polypeptide: Maltose/maltodextrin import ATP-binding protein MalK (372 aa).

Residues 4–234 (VSLRNVGKSY…PANRFVAGFI (231 aa)) enclose the ABC transporter domain. 36–43 (GPSGCGKS) serves as a coordination point for ATP.

Belongs to the ABC transporter superfamily. Maltooligosaccharide importer (TC 3.A.1.1.1) family. The complex is composed of two ATP-binding proteins (MalK), two transmembrane proteins (MalG and MalK) and a solute-binding protein (MalE).

It is found in the cell inner membrane. The enzyme catalyses D-maltose(out) + ATP + H2O = D-maltose(in) + ADP + phosphate + H(+). Its function is as follows. Part of the ABC transporter complex MalEFGK involved in maltose/maltodextrin import. Responsible for energy coupling to the transport system. The chain is Maltose/maltodextrin import ATP-binding protein MalK from Mannheimia succiniciproducens (strain KCTC 0769BP / MBEL55E).